Here is a 77-residue protein sequence, read N- to C-terminus: Small ribosomal subunit protein bS18 (77 aa).

The protein belongs to the bacterial ribosomal protein bS18 family. As to quaternary structure, part of the 30S ribosomal subunit. Forms a tight heterodimer with protein bS6.

In terms of biological role, binds as a heterodimer with protein bS6 to the central domain of the 16S rRNA, where it helps stabilize the platform of the 30S subunit. In Halalkalibacterium halodurans (strain ATCC BAA-125 / DSM 18197 / FERM 7344 / JCM 9153 / C-125) (Bacillus halodurans), this protein is Small ribosomal subunit protein bS18.